Reading from the N-terminus, the 165-residue chain is 6,7-dimethyl-8-ribityllumazine synthase (165 aa).

5-amino-6-(D-ribitylamino)uracil-binding positions include F24, 62 to 64 (AFE), and 86 to 88 (AVI). 91-92 (DT) is a binding site for (2S)-2-hydroxy-3-oxobutyl phosphate. The Proton donor role is filled by H94. F119 contributes to the 5-amino-6-(D-ribitylamino)uracil binding site. Residue R133 coordinates (2S)-2-hydroxy-3-oxobutyl phosphate.

It belongs to the DMRL synthase family.

The enzyme catalyses (2S)-2-hydroxy-3-oxobutyl phosphate + 5-amino-6-(D-ribitylamino)uracil = 6,7-dimethyl-8-(1-D-ribityl)lumazine + phosphate + 2 H2O + H(+). Its pathway is cofactor biosynthesis; riboflavin biosynthesis; riboflavin from 2-hydroxy-3-oxobutyl phosphate and 5-amino-6-(D-ribitylamino)uracil: step 1/2. Its function is as follows. Catalyzes the formation of 6,7-dimethyl-8-ribityllumazine by condensation of 5-amino-6-(D-ribitylamino)uracil with 3,4-dihydroxy-2-butanone 4-phosphate. This is the penultimate step in the biosynthesis of riboflavin. This Prochlorococcus marinus (strain MIT 9303) protein is 6,7-dimethyl-8-ribityllumazine synthase.